A 556-amino-acid chain; its full sequence is Formate--tetrahydrofolate ligase (556 aa).

Residue 65 to 72 (TPAGEGKT) coordinates ATP.

This sequence belongs to the formate--tetrahydrofolate ligase family.

It catalyses the reaction (6S)-5,6,7,8-tetrahydrofolate + formate + ATP = (6R)-10-formyltetrahydrofolate + ADP + phosphate. It participates in one-carbon metabolism; tetrahydrofolate interconversion. This Proteus mirabilis (strain HI4320) protein is Formate--tetrahydrofolate ligase.